A 324-amino-acid chain; its full sequence is UDP-N-acetylenolpyruvoylglucosamine reductase (324 aa).

In terms of domain architecture, FAD-binding PCMH-type spans 39-220 (RTGGLAELFY…RAAMHEVALH (182 aa)). Residue Arg185 is part of the active site. Catalysis depends on Ser234, which acts as the Proton donor. Glu304 is an active-site residue.

The protein belongs to the MurB family. FAD serves as cofactor.

The protein resides in the cytoplasm. It carries out the reaction UDP-N-acetyl-alpha-D-muramate + NADP(+) = UDP-N-acetyl-3-O-(1-carboxyvinyl)-alpha-D-glucosamine + NADPH + H(+). It functions in the pathway cell wall biogenesis; peptidoglycan biosynthesis. Functionally, cell wall formation. This chain is UDP-N-acetylenolpyruvoylglucosamine reductase, found in Bartonella bacilliformis (strain ATCC 35685 / KC583 / Herrer 020/F12,63).